We begin with the raw amino-acid sequence, 72 residues long: Large ribosomal subunit protein bL28 (72 aa).

Belongs to the bacterial ribosomal protein bL28 family.

This is Large ribosomal subunit protein bL28 from Chlorobaculum tepidum (strain ATCC 49652 / DSM 12025 / NBRC 103806 / TLS) (Chlorobium tepidum).